The sequence spans 403 residues: Protein LAZ1 homolog 2 (403 aa).

Helical transmembrane passes span 16 to 36, 50 to 70, 162 to 182, 191 to 211, 236 to 256, and 269 to 289; these read SLIIGGSFATVAICLSLYSIL, WIVSVLFMVPVYATESIISLS, MILKTFCAFLTFLLELLGVYG, GYPYIVVVLNFSQMWALFCLV, IVFATWWQGFGIALLCYYGIL, and FLICIEMAIAAVAHLFVFPAE. The interval 381–403 is disordered; it reads SDGKEETEVTEEVTVETSVPPKE.

This sequence belongs to the TMEM184 family.

Its subcellular location is the membrane. The sequence is that of Protein LAZ1 homolog 2 from Arabidopsis thaliana (Mouse-ear cress).